The primary structure comprises 250 residues: Cell division protein ZapD (250 aa).

Belongs to the ZapD family. As to quaternary structure, interacts with FtsZ.

It localises to the cytoplasm. Its function is as follows. Cell division factor that enhances FtsZ-ring assembly. Directly interacts with FtsZ and promotes bundling of FtsZ protofilaments, with a reduction in FtsZ GTPase activity. The chain is Cell division protein ZapD from Pectobacterium atrosepticum (strain SCRI 1043 / ATCC BAA-672) (Erwinia carotovora subsp. atroseptica).